A 721-amino-acid polypeptide reads, in one-letter code: Polyribonucleotide nucleotidyltransferase (721 aa).

2 residues coordinate Mg(2+): Asp-490 and Asp-496. Residues 557 to 623 (PRIISIKINP…RIAGLTKEAK (67 aa)) enclose the KH domain. The S1 motif domain maps to 625 to 693 (GEEYEGTVVK…DRGKIDLIRP (69 aa)). The interval 693–721 (PELEGKIAPREPRAPRGGGDRGPRPPRRD) is disordered.

This sequence belongs to the polyribonucleotide nucleotidyltransferase family. Requires Mg(2+) as cofactor.

It is found in the cytoplasm. It carries out the reaction RNA(n+1) + phosphate = RNA(n) + a ribonucleoside 5'-diphosphate. Its function is as follows. Involved in mRNA degradation. Catalyzes the phosphorolysis of single-stranded polyribonucleotides processively in the 3'- to 5'-direction. The polypeptide is Polyribonucleotide nucleotidyltransferase (Deinococcus deserti (strain DSM 17065 / CIP 109153 / LMG 22923 / VCD115)).